The chain runs to 434 residues: Trigger factor (434 aa).

Residues 161 to 246 (EDRVTVDFNG…LKKVEERELP (86 aa)) form the PPIase FKBP-type domain.

This sequence belongs to the FKBP-type PPIase family. Tig subfamily.

The protein resides in the cytoplasm. The catalysed reaction is [protein]-peptidylproline (omega=180) = [protein]-peptidylproline (omega=0). Functionally, involved in protein export. Acts as a chaperone by maintaining the newly synthesized protein in an open conformation. Functions as a peptidyl-prolyl cis-trans isomerase. This Proteus mirabilis (strain HI4320) protein is Trigger factor.